A 246-amino-acid polypeptide reads, in one-letter code: Phosducin (246 aa).

Over residues Met-1–Glu-14 the composition is skewed to acidic residues. The tract at residues Met-1–Arg-70 is disordered. Positions Met-1–Glu-246 constitute a Phosducin domain. A compositionally biased stretch (basic and acidic residues) spans Ser-58–Ser-69. Ser-73 is modified (phosphoserine; by PKA). The thioredoxin fold stretch occupies residues Tyr-111–Glu-246.

The protein belongs to the phosducin family. Interacts with CRX. Forms a complex with the beta and gamma subunits of the GTP-binding protein, transducin. Light-induced changes in cyclic nucleotide levels modulate the phosphorylation of this protein by cAMP kinase.

It is found in the cytoplasm. It localises to the cytosol. Its subcellular location is the nucleus. The protein localises to the cell projection. The protein resides in the cilium. It is found in the photoreceptor outer segment. It localises to the photoreceptor inner segment. In terms of biological role, inhibits the transcriptional activation activity of the cone-rod homeobox CRX. May participate in the regulation of visual phototransduction or in the integration of photoreceptor metabolism. This chain is Phosducin (Pdc), found in Rattus norvegicus (Rat).